The following is a 378-amino-acid chain: Spermidine/putrescine import ATP-binding protein PotA (378 aa).

The 231-residue stretch at 18–248 (VLLSGISKSF…PKNLFVAGFI (231 aa)) folds into the ABC transporter domain. 50–57 (GPSGCGKT) contributes to the ATP binding site.

Belongs to the ABC transporter superfamily. Spermidine/putrescine importer (TC 3.A.1.11.1) family. In terms of assembly, the complex is composed of two ATP-binding proteins (PotA), two transmembrane proteins (PotB and PotC) and a solute-binding protein (PotD).

Its subcellular location is the cell inner membrane. The enzyme catalyses ATP + H2O + polyamine-[polyamine-binding protein]Side 1 = ADP + phosphate + polyamineSide 2 + [polyamine-binding protein]Side 1.. Functionally, part of the ABC transporter complex PotABCD involved in spermidine/putrescine import. Responsible for energy coupling to the transport system. This is Spermidine/putrescine import ATP-binding protein PotA from Salmonella paratyphi A (strain ATCC 9150 / SARB42).